The sequence spans 201 residues: Glycerol-3-phosphate acyltransferase (201 aa).

The next 5 helical transmembrane spans lie at 10–30 (MLIG…GLIL), 60–80 (LAAA…LIAA), 86–106 (AAIA…WIGF), 116–136 (LGVL…AWIV), and 166–186 (ALAA…RANI).

The protein belongs to the PlsY family. Probably interacts with PlsX.

The protein resides in the cell inner membrane. The catalysed reaction is an acyl phosphate + sn-glycerol 3-phosphate = a 1-acyl-sn-glycero-3-phosphate + phosphate. It participates in lipid metabolism; phospholipid metabolism. Catalyzes the transfer of an acyl group from acyl-phosphate (acyl-PO(4)) to glycerol-3-phosphate (G3P) to form lysophosphatidic acid (LPA). This enzyme utilizes acyl-phosphate as fatty acyl donor, but not acyl-CoA or acyl-ACP. In Brucella abortus (strain 2308), this protein is Glycerol-3-phosphate acyltransferase.